We begin with the raw amino-acid sequence, 286 residues long: NADPH-dependent 7-cyano-7-deazaguanine reductase (286 aa).

92 to 94 (IES) contributes to the substrate binding site. Position 94 to 95 (94 to 95 (SK)) interacts with NADPH. Cys194 serves as the catalytic Thioimide intermediate. The active-site Proton donor is the Asp201. 233–234 (HE) contacts substrate. NADPH is bound at residue 262–263 (RG).

The protein belongs to the GTP cyclohydrolase I family. QueF type 2 subfamily. As to quaternary structure, homodimer.

The protein localises to the cytoplasm. It carries out the reaction 7-aminomethyl-7-carbaguanine + 2 NADP(+) = 7-cyano-7-deazaguanine + 2 NADPH + 3 H(+). It functions in the pathway tRNA modification; tRNA-queuosine biosynthesis. Functionally, catalyzes the NADPH-dependent reduction of 7-cyano-7-deazaguanine (preQ0) to 7-aminomethyl-7-deazaguanine (preQ1). The polypeptide is NADPH-dependent 7-cyano-7-deazaguanine reductase (Shewanella sp. (strain MR-4)).